Reading from the N-terminus, the 241-residue chain is Beta-nerve growth factor (241 aa).

The N-terminal stretch at 1 to 18 (MSMLFYTLITAFLIGVQA) is a signal peptide. A propeptide spanning residues 19-121 (EPYTDSNVPE…SFNRTHRSKR (103 aa)) is cleaved from the precursor. 3 N-linked (GlcNAc...) asparagine glycosylation sites follow: asparagine 69, asparagine 114, and asparagine 166. Cystine bridges form between cysteine 136-cysteine 201, cysteine 179-cysteine 229, and cysteine 189-cysteine 231. A 1-acyl-sn-glycero-3-phospho-(1D-myo-inositol) contacts are provided by tyrosine 173 and lysine 209. Lysine 209 is a binding site for a 1-acyl-sn-glycero-3-phospho-L-serine.

The protein belongs to the NGF-beta family. Homodimer. The homodimer interacts with a single NTRK1 chain. The homodimer interacts with a single NGFR chain. The NGF dimer interacts with a single SORCS2 chain (via extracellular domain). The NGF precursor (proNGF) binds to a receptor complex formed by SORT1 and NGFR, which leads to NGF endocytosis. Both mature NGF and the immature NGF precursor (proNGF) interact with SORCS2 and with the heterodimer formed by SORCS2 and NGFR (via extracellular domains). The NGF precursor (proNGF) has much higher affinity for SORCS2 than mature NGF. The NGF precursor (proNGF) has much higher affinity for SORT1 than mature NGF. Interacts with ADAM10 in a divalent cation-dependent manner. Interacts with SORCS3. In terms of tissue distribution, detected in the granule and pyramidal cell layer in the hippocampus.

Its subcellular location is the secreted. The protein localises to the endosome lumen. Its function is as follows. Nerve growth factor is important for the development and maintenance of the sympathetic and sensory nervous systems. Extracellular ligand for the NTRK1 and NGFR receptors, activates cellular signaling cascades to regulate neuronal proliferation, differentiation and survival. The immature NGF precursor (proNGF) functions as a ligand for the heterodimeric receptor formed by SORCS2 and NGFR, and activates cellular signaling cascades that lead to inactivation of RAC1 and/or RAC2, reorganization of the actin cytoskeleton and neuronal growth cone collapse. In contrast to mature NGF, the precursor form (proNGF) promotes neuronal apoptosis (in vitro). Inhibits metalloproteinase-dependent proteolysis of platelet glycoprotein VI. Binds lysophosphatidylinositol and lysophosphatidylserine between the two chains of the homodimer. The lipid-bound form promotes histamine relase from mast cells, contrary to the lipid-free form. The polypeptide is Beta-nerve growth factor (Ngf) (Rattus norvegicus (Rat)).